The following is a 24-amino-acid chain: Erythromycin resistance leader peptide (24 aa).

The span at 1 to 14 shows a compositional bias: low complexity; the sequence is MSMGIAARPPRAAL. The disordered stretch occupies residues 1–24; it reads MSMGIAARPPRAALLPPPSVPRSR. Positions 15–24 are enriched in pro residues; it reads LPPPSVPRSR.

Functionally, this peptide is involved in the control mechanism of the synthesis of the macrolide-lincosamide-streptogramin B resistance protein. In Streptomyces fradiae (Streptomyces roseoflavus), this protein is Erythromycin resistance leader peptide.